The sequence spans 577 residues: Leucine-rich repeat protein soc-2 homolog (577 aa).

Composition is skewed to basic and acidic residues over residues 1–10 (MRRTKGRTDS) and 33–48 (STAH…EAKK). The tract at residues 1–71 (MRRTKGRTDS…PTVKKRSTPS (71 aa)) is disordered. LRR repeat units lie at residues 87-109 (GATR…KELT), 110-131 (SLRE…VGLL), 133-155 (NLET…VKLT), 156-177 (KLKV…IYKL), 179-201 (TLTT…GNLK), 202-223 (LLER…IGQL), 225-246 (HLVT…IGNC), 248-269 (HMTS…IGRL), 271-292 (AMTR…LANC), 294-315 (GIDE…LLSS), 318-339 (NLTS…PPKQ), 342-363 (QVNT…VFNK), 366-387 (YLSK…FGSW), 389-410 (SLVE…IQWL), 412-434 (NLEV…GALR), 435-456 (KLRV…IEYL), 458-479 (SLER…IGYL), 481-502 (SVTY…IGNM), 504-526 (SLEQ…LVLC), and 528-549 (SLQI…IVAG).

It belongs to the SHOC2 family.

In terms of biological role, acts as a Ras effector and participates in MAPK pathway activation. Probably acts as a scaffolding protein in a protein phosphatase complex that specifically dephosphorylates Raf kinase and stimulate Raf activity at specialized signaling complexes upon Ras activation. The chain is Leucine-rich repeat protein soc-2 homolog from Nematostella vectensis (Starlet sea anemone).